Consider the following 120-residue polypeptide: uncharacterized protein (120 aa).

A signal peptide spans M1–A19.

This is an uncharacterized protein from Salmonella typhimurium (strain LT2 / SGSC1412 / ATCC 700720).